A 451-amino-acid chain; its full sequence is Tubulin alpha-1A chain (451 aa).

Positions 1 to 4 (MREC) match the MREC motif motif. GTP-binding residues include Gln-11, Glu-71, Ser-140, Gly-144, Thr-145, Thr-179, Asn-206, and Asn-228. Glu-71 lines the Mg(2+) pocket. Glu-254 is a catalytic residue. Residues 432–451 (YEEVGVDSVEGEGEEEGEEY) form a disordered region. The residue at position 445 (Glu-445) is a 5-glutamyl polyglutamate.

It belongs to the tubulin family. Dimer of alpha and beta chains. A typical microtubule is a hollow water-filled tube with an outer diameter of 25 nm and an inner diameter of 15 nM. Alpha-beta heterodimers associate head-to-tail to form protofilaments running lengthwise along the microtubule wall with the beta-tubulin subunit facing the microtubule plus end conferring a structural polarity. Microtubules usually have 13 protofilaments but different protofilament numbers can be found in some organisms and specialized cells. Mg(2+) serves as cofactor. Some glutamate residues at the C-terminus are polyglycylated, resulting in polyglycine chains on the gamma-carboxyl group. Glycylation is mainly limited to tubulin incorporated into axonemes (cilia and flagella) whereas glutamylation is prevalent in neuronal cells, centrioles, axonemes, and the mitotic spindle. Both modifications can coexist on the same protein on adjacent residues, and lowering polyglycylation levels increases polyglutamylation, and reciprocally. The precise function of polyglycylation is still unclear. Post-translationally, some glutamate residues at the C-terminus are polyglutamylated, resulting in polyglutamate chains on the gamma-carboxyl group. Polyglutamylation plays a key role in microtubule severing by spastin (SPAST). SPAST preferentially recognizes and acts on microtubules decorated with short polyglutamate tails: severing activity by SPAST increases as the number of glutamates per tubulin rises from one to eight, but decreases beyond this glutamylation threshold. In terms of processing, undergoes a tyrosination/detyrosination cycle, the cyclic removal and re-addition of a C-terminal tyrosine residue by the enzymes tubulin tyrosine carboxypeptidase (MATCAP1, VASH1 or VASH2) and tubulin tyrosine ligase (TTL), respectively. Tyrosination promotes microtubule interaction with CAP-Gly microtubule plus-end tracking proteins. Tyrosinated tubulins regulate the initiation of dynein-driven motility. Post-translationally, detyrosination is involved in metaphase plate congression by guiding chromosomes during mitosis. Detyrosination increases microtubules-dependent mechanotransduction in dystrophic cardiac and skeletal muscle. In cardiomyocytes, detyrosinated microtubules are required to resist to contractile compression during contraction.

It is found in the cytoplasm. It localises to the cytoskeleton. The enzyme catalyses GTP + H2O = GDP + phosphate + H(+). Tubulin is the major constituent of microtubules, a cylinder consisting of laterally associated linear protofilaments composed of alpha- and beta-tubulin heterodimers. Microtubules grow by the addition of GTP-tubulin dimers to the microtubule end, where a stabilizing cap forms. Below the cap, tubulin dimers are in GDP-bound state, owing to GTPase activity of alpha-tubulin. In Gallus gallus (Chicken), this protein is Tubulin alpha-1A chain (TUBA1A).